Reading from the N-terminus, the 1068-residue chain is Cytospin-B (1068 aa).

The segment at 1–221 is disordered; sequence MRSAAKPWNP…VDGTSVSPGD (221 aa). Residue Arg-2 is the site of N-myristoyl glycine attachment. Low complexity predominate over residues 29–40; it reads SSGMKSSKSSTS. Residues Ser-38 and Ser-55 each carry the phosphoserine modification. Position 78 is a phosphothreonine (Thr-78). Residues Ser-112, Ser-131, Ser-134, Ser-137, and Ser-138 each carry the phosphoserine modification. Positions 126–144 are enriched in low complexity; the sequence is SNPRKSVSSPTSSNTPTPT. The residue at position 142 (Thr-142) is a Phosphothreonine. Residues 154-200 are compositionally biased toward basic and acidic residues; sequence PKQENEGGEKAALESQVRELLAEAKAKDSEINRLRSELKKYKEKRTL. A phosphoserine mark is found at Ser-218 and Ser-241. Composition is skewed to polar residues over residues 261 to 295, 309 to 323, and 337 to 367; these read PNSE…QMSS, LRTS…TKAS, and ETPS…SVSE. The disordered stretch occupies residues 261–367; it reads PNSEGAASHT…AGSSPNSVSE (107 aa). A phosphoserine mark is found at Ser-361, Ser-366, Ser-369, and Ser-425. The stretch at 579–773 forms a coiled coil; it reads EVQEMLKVAR…QKELGDVQGH (195 aa). Positions 777–796 are disordered; sequence VTSRAAPPPVDEEPESSEVD. A phosphoserine mark is found at Ser-847 and Ser-863. Disordered regions lie at residues 859 to 885 and 898 to 922; these read AAAV…TQRL and GRTE…SRPP. Positions 866–875 are enriched in polar residues; it reads QRHSTYSSVR. Over residues 898-909 the composition is skewed to basic and acidic residues; it reads GRTETLKPDPHL. Phosphoserine occurs at positions 912 and 914. Residues 912-922 show a composition bias toward low complexity; that stretch reads SPSLESLSRPP. A Calponin-homology (CH) domain is found at 962–1067; it reads GSKRNALLKW…YVAQIYKYFE (106 aa).

This sequence belongs to the cytospin-A family. In terms of tissue distribution, highly expressed in testis. Barely detectable in other tissues. Also highly expressed in some cancer cell lines.

Its subcellular location is the nucleus. The protein localises to the membrane. The polypeptide is Cytospin-B (SPECC1) (Homo sapiens (Human)).